The primary structure comprises 411 residues: UPF0261 protein SACE_5696 (411 aa).

Belongs to the UPF0261 family.

This Saccharopolyspora erythraea (strain ATCC 11635 / DSM 40517 / JCM 4748 / NBRC 13426 / NCIMB 8594 / NRRL 2338) protein is UPF0261 protein SACE_5696.